Reading from the N-terminus, the 192-residue chain is Large ribosomal subunit protein uL5 (192 aa).

It belongs to the universal ribosomal protein uL5 family. In terms of assembly, part of the 50S ribosomal subunit; part of the 5S rRNA/L5/L18/L25 subcomplex. Contacts the 5S rRNA and the P site tRNA. Forms a bridge to the 30S subunit in the 70S ribosome.

Its function is as follows. This is one of the proteins that bind and probably mediate the attachment of the 5S RNA into the large ribosomal subunit, where it forms part of the central protuberance. In the 70S ribosome it contacts protein S13 of the 30S subunit (bridge B1b), connecting the 2 subunits; this bridge is implicated in subunit movement. Contacts the P site tRNA; the 5S rRNA and some of its associated proteins might help stabilize positioning of ribosome-bound tRNAs. The chain is Large ribosomal subunit protein uL5 from Paenarthrobacter aurescens (strain TC1).